The chain runs to 208 residues: Molybdenum cofactor guanylyltransferase (208 aa).

GTP-binding positions include 10–12 (LAG), Lys23, Asp69, and Asp103. Residue Asp103 coordinates Mg(2+).

This sequence belongs to the MobA family. In terms of assembly, monomer. Mg(2+) serves as cofactor.

It localises to the cytoplasm. It catalyses the reaction Mo-molybdopterin + GTP + H(+) = Mo-molybdopterin guanine dinucleotide + diphosphate. In terms of biological role, transfers a GMP moiety from GTP to Mo-molybdopterin (Mo-MPT) cofactor (Moco or molybdenum cofactor) to form Mo-molybdopterin guanine dinucleotide (Mo-MGD) cofactor. The sequence is that of Molybdenum cofactor guanylyltransferase from Mesorhizobium japonicum (strain LMG 29417 / CECT 9101 / MAFF 303099) (Mesorhizobium loti (strain MAFF 303099)).